Here is a 975-residue protein sequence, read N- to C-terminus: Leucine-zipper-like transcriptional regulator 1 homolog (975 aa).

The span at 16–32 (RGGGGGGCGGGGAGGSA) shows a compositional bias: gly residues. 2 disordered regions span residues 16–41 (RGGG…TSGS) and 158–186 (MSSS…SCSS). The segment covering 174 to 186 (ASSSHPPGSSCSS) has biased composition (low complexity). Kelch repeat units follow at residues 263-312 (AMFV…VAGS), 314-369 (MFIF…VYDN), 370-417 (KMWI…PVAV), 421-467 (AMYV…PSRR), 478-524 (FLYV…FHAS), and 530-581 (AMYI…FIVG). BTB domains lie at 574-670 (CDIQ…DLKD) and 801-870 (CDIS…KMPP).

It belongs to the LZTR1 family. In terms of assembly, component of some BCR (BTB-CUL3-RBX1) E3 ubiquitin-protein ligase complex. In terms of tissue distribution, expressed in Rdl-expressing neurons of the mushroom body, the neurons projecting to the LC9 optic glomerulus and in a neuronal cluster near the subesophageal ganglion (at protein level).

It participates in protein modification; protein ubiquitination. Inhibitor of Ras signaling. Acts as a substrate-specific adapter of a BCR (BTB-CUL3-RBX1) E3 ubiquitin-protein ligase complex that mediates ubiquitination of Ras. Together with Nf1, plays an important role for normal sleep behavior, mainly during the night. Might affect sleep by modulating GABA signaling in Rdl-expressing neurons. Might play a role in the regulation of brain glycogen metabolism and organismal levels of triglycerides. The sequence is that of Leucine-zipper-like transcriptional regulator 1 homolog from Drosophila melanogaster (Fruit fly).